A 210-amino-acid polypeptide reads, in one-letter code: Outer-membrane lipoprotein LolB (210 aa).

The first 26 residues, 1–26, serve as a signal peptide directing secretion; sequence MSKLKIDTKRRFSLLIALVLIISLSS. Cys27 is lipidated: N-palmitoyl cysteine. The S-diacylglycerol cysteine moiety is linked to residue Cys27.

Belongs to the LolB family. In terms of assembly, monomer.

The protein resides in the cell outer membrane. Its function is as follows. Plays a critical role in the incorporation of lipoproteins in the outer membrane after they are released by the LolA protein. In Francisella tularensis subsp. holarctica (strain FTNF002-00 / FTA), this protein is Outer-membrane lipoprotein LolB.